A 141-amino-acid polypeptide reads, in one-letter code: Large-conductance mechanosensitive channel (141 aa).

The next 3 membrane-spanning stretches (helical) occupy residues 14-34, 38-58, and 81-101; these read VMDL…VKSL, IIMP…YFLG, and GSFI…FLMV.

This sequence belongs to the MscL family. In terms of assembly, homopentamer.

It is found in the cell inner membrane. Its function is as follows. Channel that opens in response to stretch forces in the membrane lipid bilayer. May participate in the regulation of osmotic pressure changes within the cell. This is Large-conductance mechanosensitive channel from Rhizobium rhizogenes (strain K84 / ATCC BAA-868) (Agrobacterium radiobacter).